An 81-amino-acid chain; its full sequence is Omega-conotoxin-like TxO4 (81 aa).

The first 22 residues, 1-22, serve as a signal peptide directing secretion; the sequence is MKLTCVVIVAVLFLTAWTFVTA. Positions 23–52 are excised as a propeptide; it reads VPHSSNALENLYLKARHEMENPEASKLNTR. 3 cysteine pairs are disulfide-bonded: cysteine 55-cysteine 72, cysteine 62-cysteine 76, and cysteine 71-cysteine 80. Proline 70 is subject to 4-hydroxyproline; partial. Residue tryptophan 75 is modified to 6'-bromotryptophan; partial.

This sequence belongs to the conotoxin O1 superfamily. In terms of processing, txO4 is found with and without hydroxyproline and these two forms have a bromotryptophan. Truncated TxO4 is found with and without bromotryptophan, and these two forms have no hydroxyproline. Expressed by the venom duct.

The protein resides in the secreted. Functionally, omega-conotoxins act at presynaptic membranes, they bind and block voltage-gated calcium channels (Cav). In Conus textile (Cloth-of-gold cone), this protein is Omega-conotoxin-like TxO4.